A 239-amino-acid polypeptide reads, in one-letter code: Probable plastid-lipid-associated protein 8, chloroplastic (239 aa).

The transit peptide at 1–52 (MAATASSLTIASSFSEPRTQIHSSRRLNLPLQYSIPYKVLRSRSRRLGLVVS) directs the protein to the chloroplast. S53 is modified (N-acetylserine).

It belongs to the PAP/fibrillin family.

Its subcellular location is the plastid. It is found in the chloroplast. The protein is Probable plastid-lipid-associated protein 8, chloroplastic (PAP8) of Arabidopsis thaliana (Mouse-ear cress).